Here is a 332-residue protein sequence, read N- to C-terminus: NADH-quinone oxidoreductase subunit H (332 aa).

The next 9 helical transmembrane spans lie at 8–28 (IIEC…LAGF), 44–66 (IGPN…KLFA), 78–98 (PIFI…MAPI), 120–140 (VGIL…LLAG), 157–177 (IQFL…LMII), 196–216 (WLIF…YVEL), 245–265 (MFFI…SLVF), 274–294 (FIPG…LFMW), and 312–332 (WKIM…ILLF).

Belongs to the complex I subunit 1 family. As to quaternary structure, NDH-1 is composed of 14 different subunits. Subunits NuoA, H, J, K, L, M, N constitute the membrane sector of the complex.

It is found in the cell inner membrane. It carries out the reaction a quinone + NADH + 5 H(+)(in) = a quinol + NAD(+) + 4 H(+)(out). Its function is as follows. NDH-1 shuttles electrons from NADH, via FMN and iron-sulfur (Fe-S) centers, to quinones in the respiratory chain. The immediate electron acceptor for the enzyme in this species is believed to be ubiquinone. Couples the redox reaction to proton translocation (for every two electrons transferred, four hydrogen ions are translocated across the cytoplasmic membrane), and thus conserves the redox energy in a proton gradient. This subunit may bind ubiquinone. This chain is NADH-quinone oxidoreductase subunit H, found in Helicobacter hepaticus (strain ATCC 51449 / 3B1).